Reading from the N-terminus, the 141-residue chain is ATP synthase epsilon chain (141 aa).

The protein belongs to the ATPase epsilon chain family. As to quaternary structure, F-type ATPases have 2 components, CF(1) - the catalytic core - and CF(0) - the membrane proton channel. CF(1) has five subunits: alpha(3), beta(3), gamma(1), delta(1), epsilon(1). CF(0) has three main subunits: a, b and c.

Its subcellular location is the cell inner membrane. Functionally, produces ATP from ADP in the presence of a proton gradient across the membrane. This Pseudomonas syringae pv. syringae (strain B728a) protein is ATP synthase epsilon chain.